We begin with the raw amino-acid sequence, 136 residues long: Small cardioactive peptides (136 aa).

A signal peptide spans 1–24 (METSVSRVTVSLTLLVLIICSADA). Met-33 and Met-46 each carry methionine amide. The propeptide at 49-135 (SQMKTETGTD…VLSKLKSLLQ (87 aa)) is carboxy-terminal peptide.

Belongs to the SCP family. Contains three disulfide bonds. In terms of tissue distribution, highly expressed in the buccal ganglion.

It is found in the secreted. Functionally, involved in the stimulation of contractile activity in the gut, the increase of the amplitude of the heart beat, and enhancement of the contractile response of the radula closer muscle. The polypeptide is Small cardioactive peptides (Aplysia californica (California sea hare)).